The following is a 445-amino-acid chain: Phosphoglucosamine mutase 1 (445 aa).

Ser102 functions as the Phosphoserine intermediate in the catalytic mechanism. The Mg(2+) site is built by Ser102, Asp241, Asp243, and Asp245. Residue Ser102 is modified to Phosphoserine.

Belongs to the phosphohexose mutase family. Mg(2+) serves as cofactor. Activated by phosphorylation.

The catalysed reaction is alpha-D-glucosamine 1-phosphate = D-glucosamine 6-phosphate. Catalyzes the conversion of glucosamine-6-phosphate to glucosamine-1-phosphate. The chain is Phosphoglucosamine mutase 1 from Shewanella amazonensis (strain ATCC BAA-1098 / SB2B).